A 236-amino-acid polypeptide reads, in one-letter code: 2,3,4,5-tetrahydropyridine-2,6-dicarboxylate N-acetyltransferase (236 aa).

This sequence belongs to the transferase hexapeptide repeat family. DapH subfamily.

The catalysed reaction is (S)-2,3,4,5-tetrahydrodipicolinate + acetyl-CoA + H2O = L-2-acetamido-6-oxoheptanedioate + CoA. It participates in amino-acid biosynthesis; L-lysine biosynthesis via DAP pathway; LL-2,6-diaminopimelate from (S)-tetrahydrodipicolinate (acetylase route): step 1/3. In terms of biological role, catalyzes the transfer of an acetyl group from acetyl-CoA to tetrahydrodipicolinate. This chain is 2,3,4,5-tetrahydropyridine-2,6-dicarboxylate N-acetyltransferase, found in Lactobacillus acidophilus (strain ATCC 700396 / NCK56 / N2 / NCFM).